The following is a 1205-amino-acid chain: Caskin-2 (1205 aa).

ANK repeat units lie at residues 48 to 77 (DGFS…SVDI), 81 to 110 (NGMR…SVNA), 114 to 143 (DGQI…NPCH), 147 to 176 (GKKT…CVSL), 188 to 217 (NFTT…EINK), and 220 to 249 (KMGT…DVNI). Positions 281–347 (SGILKVRALK…PPSIVEVISK (67 aa)) constitute an SH3 domain. Composition is skewed to polar residues over residues 377 to 388 (SPGSQLGINPDT) and 398 to 411 (GSES…SGQS). Residues 377–411 (SPGSQLGINPDTSVAGDRHSVGSESSVRSAGSGQS) are disordered. SAM domains are found at residues 468–531 (KDAE…LIVA) and 537–601 (QIPV…LLDL). Low complexity predominate over residues 666 to 687 (RRSFSQESISSRSQGSGHSQES). Disordered regions lie at residues 666-689 (RRSF…ESAS), 784-964 (RPGR…QRHL), 984-1054 (QIAA…SQEP), and 1132-1155 (SEAS…KGPP). Over residues 823 to 840 (SSMSSAEGQSPEGQSSVK) the composition is skewed to polar residues. Over residues 908-919 (ISSQHSSSESIP) the composition is skewed to low complexity. Polar residues predominate over residues 942–959 (DATSELSPTQESQLQSAE). Positions 1009 to 1037 (KNEEHDFNLTESDTVKRRPKVKEKEEESP) are enriched in basic and acidic residues. Composition is skewed to polar residues over residues 1042 to 1054 (ANNS…SQEP) and 1137 to 1155 (REQT…KGPP).

This Xenopus laevis (African clawed frog) protein is Caskin-2 (caskin2).